We begin with the raw amino-acid sequence, 704 residues long: Elongation factor G (704 aa).

Residues Asn-10–Leu-290 enclose the tr-type G domain. GTP is bound by residues Ala-19–Thr-26, Asp-83–His-87, and Asn-137–Asp-140.

It belongs to the TRAFAC class translation factor GTPase superfamily. Classic translation factor GTPase family. EF-G/EF-2 subfamily.

Its subcellular location is the cytoplasm. Functionally, catalyzes the GTP-dependent ribosomal translocation step during translation elongation. During this step, the ribosome changes from the pre-translocational (PRE) to the post-translocational (POST) state as the newly formed A-site-bound peptidyl-tRNA and P-site-bound deacylated tRNA move to the P and E sites, respectively. Catalyzes the coordinated movement of the two tRNA molecules, the mRNA and conformational changes in the ribosome. The chain is Elongation factor G from Paenarthrobacter aurescens (strain TC1).